A 716-amino-acid chain; its full sequence is Translation initiation factor IF-2 (716 aa).

Residues 50–137 (FKKSAKPAGN…KPKKELPEKI (88 aa)) are disordered. Residues 92–101 (NNVQNTQFNN) are compositionally biased toward low complexity. Residues 102 to 118 (KNKKKNNNNKKNKRGKN) are compositionally biased toward basic residues. Over residues 125 to 137 (KQFKPKKELPEKI) the composition is skewed to basic and acidic residues. The 170-residue stretch at 217-386 (IRPPVVTIMG…LLVSEVEELK (170 aa)) folds into the tr-type G domain. The segment at 226–233 (GHVDHGKT) is G1. 226-233 (GHVDHGKT) contacts GTP. The tract at residues 251-255 (GITQH) is G2. The G3 stretch occupies residues 272-275 (DTPG). GTP-binding positions include 272-276 (DTPGH) and 326-329 (NKID). The interval 326-329 (NKID) is G4. Residues 362-364 (SAL) are G5.

Belongs to the TRAFAC class translation factor GTPase superfamily. Classic translation factor GTPase family. IF-2 subfamily.

It localises to the cytoplasm. Its function is as follows. One of the essential components for the initiation of protein synthesis. Protects formylmethionyl-tRNA from spontaneous hydrolysis and promotes its binding to the 30S ribosomal subunits. Also involved in the hydrolysis of GTP during the formation of the 70S ribosomal complex. This is Translation initiation factor IF-2 from Bacillus licheniformis (strain ATCC 14580 / DSM 13 / JCM 2505 / CCUG 7422 / NBRC 12200 / NCIMB 9375 / NCTC 10341 / NRRL NRS-1264 / Gibson 46).